We begin with the raw amino-acid sequence, 315 residues long: uncharacterized protein (315 aa).

This is an uncharacterized protein from Caenorhabditis elegans.